A 175-amino-acid polypeptide reads, in one-letter code: PE-PGRS family protein PE_PGRS8 (175 aa).

The PE domain occupies 1 to 93 (MSFVIAAPEA…AGSYAAAEAA (93 aa)).

The protein belongs to the mycobacterial PE family. PGRS subfamily.

It localises to the secreted. The protein resides in the cell wall. Its subcellular location is the cell surface. This is PE-PGRS family protein PE_PGRS8 from Mycobacterium tuberculosis (strain ATCC 25618 / H37Rv).